We begin with the raw amino-acid sequence, 344 residues long: Holliday junction branch migration complex subunit RuvB (344 aa).

A large ATPase domain (RuvB-L) region spans residues M1–Y182. ATP-binding positions include I21, R22, G63, K66, T67, T68, E129–F131, R172, Y182, and R219. T67 provides a ligand contact to Mg(2+). The interval A183–E253 is small ATPAse domain (RuvB-S). Residues E256–S344 form a head domain (RuvB-H) region. Residues R311 and R316 each coordinate DNA.

Belongs to the RuvB family. As to quaternary structure, homohexamer. Forms an RuvA(8)-RuvB(12)-Holliday junction (HJ) complex. HJ DNA is sandwiched between 2 RuvA tetramers; dsDNA enters through RuvA and exits via RuvB. An RuvB hexamer assembles on each DNA strand where it exits the tetramer. Each RuvB hexamer is contacted by two RuvA subunits (via domain III) on 2 adjacent RuvB subunits; this complex drives branch migration. In the full resolvosome a probable DNA-RuvA(4)-RuvB(12)-RuvC(2) complex forms which resolves the HJ.

The protein resides in the cytoplasm. The enzyme catalyses ATP + H2O = ADP + phosphate + H(+). In terms of biological role, the RuvA-RuvB-RuvC complex processes Holliday junction (HJ) DNA during genetic recombination and DNA repair, while the RuvA-RuvB complex plays an important role in the rescue of blocked DNA replication forks via replication fork reversal (RFR). RuvA specifically binds to HJ cruciform DNA, conferring on it an open structure. The RuvB hexamer acts as an ATP-dependent pump, pulling dsDNA into and through the RuvAB complex. RuvB forms 2 homohexamers on either side of HJ DNA bound by 1 or 2 RuvA tetramers; 4 subunits per hexamer contact DNA at a time. Coordinated motions by a converter formed by DNA-disengaged RuvB subunits stimulates ATP hydrolysis and nucleotide exchange. Immobilization of the converter enables RuvB to convert the ATP-contained energy into a lever motion, pulling 2 nucleotides of DNA out of the RuvA tetramer per ATP hydrolyzed, thus driving DNA branch migration. The RuvB motors rotate together with the DNA substrate, which together with the progressing nucleotide cycle form the mechanistic basis for DNA recombination by continuous HJ branch migration. Branch migration allows RuvC to scan DNA until it finds its consensus sequence, where it cleaves and resolves cruciform DNA. The protein is Holliday junction branch migration complex subunit RuvB of Pelodictyon phaeoclathratiforme (strain DSM 5477 / BU-1).